Consider the following 684-residue polypeptide: MAEGEDVLPLPTSSGDGWEKDLEEALEAGGCDLETLRNIIQGRPLPADLRAKVWKIALNVAGKGDSLASWDGILDLPEQNTIHKDCLQFIDQLSVPEEKAAELLLDIESVITFYCKSRNIKYSTSLSWIHLLKPLVHLQLPRSDLYNCFYAIMNKYIPRDCSQKGRPFHLFRLLIQYHEPELCSYLDTKKITPDSYALNWLGSLFACYCSIEVTQAIWDGYLQQADPFFIYFLMLIILVNAKEVILTQESDSKEEVIQFLENTPSSLNIEDIEDLFSLAQYYCSKTPASFRKDNHHLFGSTLLGIKDDDADLSQALCLAISVSEILQANQLQGEGVRFFVVDCRPAEQYNAGHLSTAFHLDSDLMLQNPSEFAQSVKSLLEAQKQSIESGSIAGGEHLCFMGSGREEEDMYMNMVLAHFLQKNKEYVSIASGGFMALQQHLADINVDGPENGYGHWIASTSGSRSSINSVDGESPNGSSDRGMKSLVNKMTVALKTKSVNVWEKVISFIENTSTPVDRHVSSSDRVGKPYRGVKPVFSIGDEEEYDTDEIDSSSMSDDDRKEVVNIQTWINKPDVKHHFPCKEVKESGHMFPSHLLVTATHMYCLREIVSRKGLAYIQSRQALNSVVKITSKKKHPELITFKYGNSSASGIEILAIERYLIPNAGDATKAIKQQIMKVLDALES.

Positions 44 to 225 constitute a Rab-GAP TBC domain; the sequence is PLPADLRAKV…AIWDGYLQQA (182 aa). Phosphoserine is present on serine 300. The Rhodanese domain maps to 334 to 446; sequence EGVRFFVVDC…LQQHLADINV (113 aa). The span at 459-479 shows a compositional bias: polar residues; the sequence is STSGSRSSINSVDGESPNGSS. Residues 459–482 are disordered; it reads STSGSRSSINSVDGESPNGSSDRG. Residues serine 469, serine 474, and serine 507 each carry the phosphoserine modification. At threonine 514 the chain carries Phosphothreonine. The tract at residues 514 to 558 is may mediate the interaction with C17orf75, FAM91A1 and WDR11; the sequence is TPVDRHVSSSDRVGKPYRGVKPVFSIGDEEEYDTDEIDSSSMSDD. A may mediate the interaction with WASHC1 region spans residues 514-684; sequence TPVDRHVSSS…IMKVLDALES (171 aa). A Phosphoserine modification is found at serine 556. The may mediate the interaction with FKBP15 and WASHC2; required for endosome to Golgi trafficking stretch occupies residues 559–684; it reads DRKEVVNIQT…IMKVLDALES (126 aa).

Directly interacts with GOLGA1 and GOLGA4. Interacts with FAM91A1, C17ORF75 and WDR11; the interaction recruits TBC1D23 to AP-1-derived vesicles. Directly interacts with WASHC1 and WASHC2A/FAM21A. Interacts with FKBP15.

It localises to the golgi apparatus. The protein localises to the trans-Golgi network. The protein resides in the cytoplasmic vesicle. Putative Rab GTPase-activating protein which plays a role in vesicular trafficking. Involved in endosome-to-Golgi trafficking. Acts as a bridging protein by binding simultaneously to golgins, including GOLGA1 and GOLGA4, located at the trans-Golgi, and to the WASH complex, located on endosome-derived vesicles. Together with WDR11 complex facilitates the golgin-mediated capture of vesicles generated using AP-1. Plays a role in brain development, including in cortical neuron positioning. May also be important for neurite outgrowth, possibly through its involvement in membrane trafficking and cargo delivery, 2 processes that are essential for axonal and dendritic growth. May act as a general inhibitor of innate immunity signaling, strongly inhibiting multiple TLR and dectin/CLEC7A-signaling pathways. Does not alter initial activation events, but instead affects maintenance of inflammatory gene expression several hours after bacterial lipopolysaccharide (LPS) challenge. The chain is TBC1 domain family member 23 (TBC1D23) from Pongo abelii (Sumatran orangutan).